The chain runs to 490 residues: MQPAMMMFSSKYWARRGFSLDSAVPEEHQLLGSSTLNKPNSGKNDDKGNKGSSKREAATESGKTAVVFSLKNEVGGLVKALRLFQEKRVNMVHIESRKSRRRSSEVEIFVDCECGKTEFNELIQLLKFQTTIVTLNPPENIWTEEEELEDVPWFPRKISELDKCSHRVLMYGSELDADHPGFKDNVYRQRRKYFVDVAMGYKYGQPIPRVEYTEEETKTWGVVFRELSKLYPTHACREYLKNFPLLTKYCGYREDNVPQLEDVSMFLKERSGFTVRPVAGYLSPRDFLAGLAYRVFHCTQYIRHGSDPLYTPEPDTCHELLGHVPLLADPKFAQFSQEIGLASLGASDEDVQKLATCYFFTIEFGLCKQEGQLRAYGAGLLSSIGELKHALSDKACVKAFDPKTTCLQECLITTFQEAYFVSESFEEAKEKMRDFAKSITRPFSVYFNPYTQSIEILKDTRSIENVVQDLRSDLNTVCDALNKMNQYLGI.

S19 carries the post-translational modification Phosphoserine. Polar residues predominate over residues 31–42; it reads LGSSTLNKPNSG. Positions 31–58 are disordered; the sequence is LGSSTLNKPNSGKNDDKGNKGSSKREAA. A compositionally biased stretch (basic and acidic residues) spans 43–58; it reads KNDDKGNKGSSKREAA. An ACT domain is found at 65–140; that stretch reads AVVFSLKNEV…TIVTLNPPEN (76 aa). H318, H323, and E363 together coordinate Fe cation.

Belongs to the biopterin-dependent aromatic amino acid hydroxylase family. In terms of assembly, interacts with DNAJC12. The cofactor is Fe(2+). In terms of tissue distribution, brain specific.

The catalysed reaction is (6R)-L-erythro-5,6,7,8-tetrahydrobiopterin + L-tryptophan + O2 = 5-hydroxy-L-tryptophan + (4aS,6R)-4a-hydroxy-L-erythro-5,6,7,8-tetrahydrobiopterin. It participates in aromatic compound metabolism; serotonin biosynthesis; serotonin from L-tryptophan: step 1/2. The polypeptide is Tryptophan 5-hydroxylase 2 (TPH2) (Homo sapiens (Human)).